Reading from the N-terminus, the 473-residue chain is uncharacterized protein (473 aa).

In terms of domain architecture, SET spans 26 to 254 (PKLYIASSGV…KMSEIFNSFG (229 aa)).

This is an uncharacterized protein from Schizosaccharomyces pombe (strain 972 / ATCC 24843) (Fission yeast).